A 629-amino-acid polypeptide reads, in one-letter code: tRNA uridine 5-carboxymethylaminomethyl modification enzyme MnmG (629 aa).

FAD contacts are provided by residues 13–18, Val125, and Ser180; that span reads GGGHAG. 273-287 lines the NAD(+) pocket; sequence GPRYCPSIEDKVMRF. Gln370 provides a ligand contact to FAD.

Belongs to the MnmG family. In terms of assembly, homodimer. Heterotetramer of two MnmE and two MnmG subunits. FAD is required as a cofactor.

Its subcellular location is the cytoplasm. NAD-binding protein involved in the addition of a carboxymethylaminomethyl (cmnm) group at the wobble position (U34) of certain tRNAs, forming tRNA-cmnm(5)s(2)U34. This Shigella flexneri serotype 5b (strain 8401) protein is tRNA uridine 5-carboxymethylaminomethyl modification enzyme MnmG.